Here is a 614-residue protein sequence, read N- to C-terminus: Inactive leucine-rich repeat receptor-like serine/threonine-protein kinase At5g24100 (614 aa).

A signal peptide spans 1 to 21; it reads MSRGRSFIFYFVLFLFFGSSA. The Extracellular segment spans residues 22-251; it reads LYSQVTGDLA…KNGIYISEPA (230 aa). N-linked (GlcNAc...) asparagine glycosylation occurs at asparagine 53. LRR repeat units lie at residues 71–95, 96–120, 121–146, 148–167, 168–190, and 191–214; these read GTRVTALHLPGASLLGVIPPGTISR, LSELQILSLRSNGLRGPFPIDFLQL, KKLKAISLGNNRFSGPLPSDYATWTN, TVLDLYSNRFNGSIPAGFAN, LTGLVSLNLAKNSFSGEIPDLNL, and PGLRRLNFSNNNLTGSIPNSLKRF. Asparagine 146, asparagine 158, and asparagine 167 each carry an N-linked (GlcNAc...) asparagine glycan. N-linked (GlcNAc...) asparagine glycosylation is found at asparagine 197 and asparagine 202. Residues 252–272 traverse the membrane as a helical segment; sequence ILGIAISVCFVIFFVIAVVII. At 273 to 614 the chain is on the cytoplasmic side; the sequence is VCYVKRQRKS…VETLEEIERD (342 aa). One can recognise a Protein kinase domain in the interval 341–611; it reads IASAEFLGKG…VKVVETLEEI (271 aa). Serine 343 carries the post-translational modification Phosphoserine. Residues 347 to 355 and lysine 369 each bind ATP; that span reads LGKGVFGMT. A Phosphoserine modification is found at serine 420. 3 positions are modified to phosphothreonine: threonine 441, threonine 514, and threonine 591. One copy of the LRR 7 repeat lies at 578-601; that stretch reads AKLLQMLQLGTSCTAMVPAKRPDM.

Belongs to the protein kinase superfamily. Ser/Thr protein kinase family.

The protein resides in the cell membrane. This is Inactive leucine-rich repeat receptor-like serine/threonine-protein kinase At5g24100 from Arabidopsis thaliana (Mouse-ear cress).